Consider the following 151-residue polypeptide: MKRRKAREYVLQFLYACEMNENTQKICNYNFLQEEIEKFWERNYEEQNSDIKSFANQLIEGTIEHIDIIDKIIQKYADKWNIERMITIDKNILRFSIYEILYRQDIPYQVTINEAVEIAKKYSTKESAAFINGILDRIAKEEICHNKSAEK.

It belongs to the NusB family.

Involved in transcription antitermination. Required for transcription of ribosomal RNA (rRNA) genes. Binds specifically to the boxA antiterminator sequence of the ribosomal RNA (rrn) operons. The sequence is that of Transcription antitermination protein NusB from Thermodesulfovibrio yellowstonii (strain ATCC 51303 / DSM 11347 / YP87).